We begin with the raw amino-acid sequence, 622 residues long: Probable potassium transport system protein Kup (622 aa).

A run of 12 helical transmembrane segments spans residues 7-27, 44-64, 95-115, 133-153, 165-185, 199-219, 243-263, 290-310, 338-358, 370-390, 395-415, and 422-442; these read LAIGAIGIVFGDIGTSPLYAF, VLGVVSLIFWSMTLIVAIQYV, GWLVVLLGVFATSLFYGDSMI, PELQGFVIPIALVLLVGLFVL, FAPVMIVYFTVIATLGLISIV, AVLFFINDGFLAFLALGSVVL, WFGFVMPCLLLNYFGQGAMIV, LVILATFATFIASQAVISGAF, IYIPVINWALMVAVILLVLTF, IAVTGAVTIDTLLMAVLLVGV, WYYAAPVVIVFLIIDGAYFAA, and DGGWFPLVVGLIVFTLLTTWA.

It belongs to the HAK/KUP transporter (TC 2.A.72) family.

It localises to the cell inner membrane. It catalyses the reaction K(+)(in) + H(+)(in) = K(+)(out) + H(+)(out). Transport of potassium into the cell. Likely operates as a K(+):H(+) symporter. The polypeptide is Probable potassium transport system protein Kup (Erythrobacter litoralis (strain HTCC2594)).